Consider the following 331-residue polypeptide: Fructose-1,6-bisphosphatase class 1 2 (331 aa).

Residues glutamate 80, aspartate 98, leucine 100, and aspartate 101 each contribute to the Mg(2+) site. Substrate contacts are provided by residues 101 to 104 (DGSS) and asparagine 189. Residue glutamate 261 participates in Mg(2+) binding.

This sequence belongs to the FBPase class 1 family. Homotetramer. Mg(2+) serves as cofactor.

It localises to the cytoplasm. The catalysed reaction is beta-D-fructose 1,6-bisphosphate + H2O = beta-D-fructose 6-phosphate + phosphate. It participates in carbohydrate biosynthesis; Calvin cycle. This chain is Fructose-1,6-bisphosphatase class 1 2, found in Cereibacter sphaeroides (strain ATCC 17023 / DSM 158 / JCM 6121 / CCUG 31486 / LMG 2827 / NBRC 12203 / NCIMB 8253 / ATH 2.4.1.) (Rhodobacter sphaeroides).